The following is a 20-amino-acid chain: Hemocyanin subunit II (20 aa).

Residues Asp-1–Lys-20 form a disordered region. Over residues Lys-10–Lys-20 the composition is skewed to basic and acidic residues.

This sequence belongs to the tyrosinase family. Hemocyanin subfamily. As to quaternary structure, composed of 3 major subunits (IB, II and III) and 1 minor subunit (IA) which form homohexamers and heterohexamers. May also form larger structures. As to expression, hemolymph.

Its subcellular location is the secreted. It is found in the extracellular space. Hemocyanins are copper-containing oxygen carriers occurring freely dissolved in the hemolymph of many mollusks and arthropods. This is Hemocyanin subunit II from Panulirus japonicus (Japanese spiny lobster).